We begin with the raw amino-acid sequence, 228 residues long: uncharacterized protein (228 aa).

The first 23 residues, 1–23 (MIRHTRLLLASLCLIATGARASA), serve as a signal peptide directing secretion.

This is an uncharacterized protein from Methylorubrum extorquens (strain ATCC 14718 / DSM 1338 / JCM 2805 / NCIMB 9133 / AM1) (Methylobacterium extorquens).